Here is a 68-residue protein sequence, read N- to C-terminus: DNA-directed RNA polymerase subunit omega (68 aa).

Belongs to the RNA polymerase subunit omega family. The RNAP catalytic core consists of 2 alpha, 1 beta, 1 beta' and 1 omega subunit. When a sigma factor is associated with the core the holoenzyme is formed, which can initiate transcription.

The enzyme catalyses RNA(n) + a ribonucleoside 5'-triphosphate = RNA(n+1) + diphosphate. Its function is as follows. Promotes RNA polymerase assembly. Latches the N- and C-terminal regions of the beta' subunit thereby facilitating its interaction with the beta and alpha subunits. The protein is DNA-directed RNA polymerase subunit omega of Alkaliphilus metalliredigens (strain QYMF).